The chain runs to 165 residues: Crossover junction endodeoxyribonuclease RuvC (165 aa).

Active-site residues include aspartate 6, glutamate 67, and aspartate 142. Aspartate 6, glutamate 67, and aspartate 142 together coordinate Mg(2+).

It belongs to the RuvC family. Homodimer which binds Holliday junction (HJ) DNA. The HJ becomes 2-fold symmetrical on binding to RuvC with unstacked arms; it has a different conformation from HJ DNA in complex with RuvA. In the full resolvosome a probable DNA-RuvA(4)-RuvB(12)-RuvC(2) complex forms which resolves the HJ. Mg(2+) serves as cofactor.

It is found in the cytoplasm. The catalysed reaction is Endonucleolytic cleavage at a junction such as a reciprocal single-stranded crossover between two homologous DNA duplexes (Holliday junction).. Its function is as follows. The RuvA-RuvB-RuvC complex processes Holliday junction (HJ) DNA during genetic recombination and DNA repair. Endonuclease that resolves HJ intermediates. Cleaves cruciform DNA by making single-stranded nicks across the HJ at symmetrical positions within the homologous arms, yielding a 5'-phosphate and a 3'-hydroxyl group; requires a central core of homology in the junction. The consensus cleavage sequence is 5'-(A/T)TT(C/G)-3'. Cleavage occurs on the 3'-side of the TT dinucleotide at the point of strand exchange. HJ branch migration catalyzed by RuvA-RuvB allows RuvC to scan DNA until it finds its consensus sequence, where it cleaves and resolves the cruciform DNA. The sequence is that of Crossover junction endodeoxyribonuclease RuvC from Chlamydia abortus (strain DSM 27085 / S26/3) (Chlamydophila abortus).